The primary structure comprises 328 residues: Ferredoxin--NADP reductase 1 (328 aa).

Residues Asp-28, Gln-36, Tyr-41, Ala-81, Ile-116, Asp-277, and Ser-320 each contribute to the FAD site.

It belongs to the ferredoxin--NADP reductase type 2 family. In terms of assembly, homodimer. FAD serves as cofactor.

It carries out the reaction 2 reduced [2Fe-2S]-[ferredoxin] + NADP(+) + H(+) = 2 oxidized [2Fe-2S]-[ferredoxin] + NADPH. In Sulfolobus acidocaldarius (strain ATCC 33909 / DSM 639 / JCM 8929 / NBRC 15157 / NCIMB 11770), this protein is Ferredoxin--NADP reductase 1.